The chain runs to 351 residues: Phosphate acyltransferase (351 aa).

It belongs to the PlsX family. In terms of assembly, homodimer. Probably interacts with PlsY.

Its subcellular location is the cytoplasm. It carries out the reaction a fatty acyl-[ACP] + phosphate = an acyl phosphate + holo-[ACP]. It participates in lipid metabolism; phospholipid metabolism. In terms of biological role, catalyzes the reversible formation of acyl-phosphate (acyl-PO(4)) from acyl-[acyl-carrier-protein] (acyl-ACP). This enzyme utilizes acyl-ACP as fatty acyl donor, but not acyl-CoA. The polypeptide is Phosphate acyltransferase (Maricaulis maris (strain MCS10) (Caulobacter maris)).